The sequence spans 387 residues: Diphthine methyltransferase (387 aa).

WD repeat units follow at residues 62–102 (NTYG…KDDF), 119–159 (EKDV…VQFT), 195–237 (PHEL…FIWS), 241–286 (IHDA…ESIF), and 357–387 (GHDSMCYGGDWSNSLIATCSFYDNSLQTWIV).

This sequence belongs to the DPH7 family. As to quaternary structure, interacts with CAN1 and RTT10.

It is found in the cytoplasm. Its subcellular location is the endosome. It catalyses the reaction diphthine methyl ester-[translation elongation factor 2] + H2O = diphthine-[translation elongation factor 2] + methanol + H(+). It participates in protein modification; peptidyl-diphthamide biosynthesis. Catalyzes the demethylation of diphthine methyl ester to form diphthine, an intermediate in diphthamide biosynthesis, a post-translational modification of histidine which occurs in translation elongation factor 2 (EFT1 and EFT2). Also plays a role in the regulation of the retromer complex and is required for the recycling from endosomes of plasma membrane proteins like CAN1 and MUP1. Identified in a screen for mutants with decreased levels of rDNA transcription. In Saccharomyces cerevisiae (strain ATCC 204508 / S288c) (Baker's yeast), this protein is Diphthine methyltransferase (RRT2).